A 247-amino-acid chain; its full sequence is Carboxy-S-adenosyl-L-methionine synthase (247 aa).

Residues Y39, 64-66, 89-90, 117-118, N132, and R199 each bind S-adenosyl-L-methionine; these read GCS, DN, and DI.

Belongs to the class I-like SAM-binding methyltransferase superfamily. Cx-SAM synthase family. In terms of assembly, homodimer.

The enzyme catalyses prephenate + S-adenosyl-L-methionine = carboxy-S-adenosyl-L-methionine + 3-phenylpyruvate + H2O. Its function is as follows. Catalyzes the conversion of S-adenosyl-L-methionine (SAM) to carboxy-S-adenosyl-L-methionine (Cx-SAM). In Escherichia coli O127:H6 (strain E2348/69 / EPEC), this protein is Carboxy-S-adenosyl-L-methionine synthase.